A 268-amino-acid chain; its full sequence is Tryptophan synthase alpha chain (268 aa).

Active-site proton acceptor residues include Glu49 and Asp60.

Belongs to the TrpA family. In terms of assembly, tetramer of two alpha and two beta chains.

The catalysed reaction is (1S,2R)-1-C-(indol-3-yl)glycerol 3-phosphate + L-serine = D-glyceraldehyde 3-phosphate + L-tryptophan + H2O. Its pathway is amino-acid biosynthesis; L-tryptophan biosynthesis; L-tryptophan from chorismate: step 5/5. Its function is as follows. The alpha subunit is responsible for the aldol cleavage of indoleglycerol phosphate to indole and glyceraldehyde 3-phosphate. This chain is Tryptophan synthase alpha chain, found in Xylella fastidiosa (strain 9a5c).